The sequence spans 126 residues: Holo-[acyl-carrier-protein] synthase (126 aa).

D9 and E58 together coordinate Mg(2+).

This sequence belongs to the P-Pant transferase superfamily. AcpS family. Requires Mg(2+) as cofactor.

Its subcellular location is the cytoplasm. The catalysed reaction is apo-[ACP] + CoA = holo-[ACP] + adenosine 3',5'-bisphosphate + H(+). Transfers the 4'-phosphopantetheine moiety from coenzyme A to a Ser of acyl-carrier-protein. The chain is Holo-[acyl-carrier-protein] synthase from Yersinia pseudotuberculosis serotype I (strain IP32953).